The chain runs to 72 residues: Cytochrome c oxidase subunit 8C, mitochondrial (72 aa).

A mitochondrion-targeting transit peptide spans 1-29 (MSRLLLLCSSLLRHRAVLFSKPGHPGRLS). At 30–40 (HSESPQKKILS) the chain is on the mitochondrial matrix side. A helical transmembrane segment spans residues 41–64 (PTESAVGIVVFFTTFYIPAAYVLS). Topologically, residues 65–72 (SLKYFKGE) are mitochondrial intermembrane.

This sequence belongs to the cytochrome c oxidase VIII family. In terms of assembly, component of the cytochrome c oxidase (complex IV, CIV), a multisubunit enzyme composed of 14 subunits. The complex is composed of a catalytic core of 3 subunits MT-CO1, MT-CO2 and MT-CO3, encoded in the mitochondrial DNA, and 11 supernumerary subunits COX4I, COX5A, COX5B, COX6A, COX6B, COX6C, COX7A, COX7B, COX7C, COX8 and NDUFA4, which are encoded in the nuclear genome. The complex exists as a monomer or a dimer and forms supercomplexes (SCs) in the inner mitochondrial membrane with NADH-ubiquinone oxidoreductase (complex I, CI) and ubiquinol-cytochrome c oxidoreductase (cytochrome b-c1 complex, complex III, CIII), resulting in different assemblies (supercomplex SCI(1)III(2)IV(1) and megacomplex MCI(2)III(2)IV(2)).

Its subcellular location is the mitochondrion inner membrane. It participates in energy metabolism; oxidative phosphorylation. Functionally, component of the cytochrome c oxidase, the last enzyme in the mitochondrial electron transport chain which drives oxidative phosphorylation. The respiratory chain contains 3 multisubunit complexes succinate dehydrogenase (complex II, CII), ubiquinol-cytochrome c oxidoreductase (cytochrome b-c1 complex, complex III, CIII) and cytochrome c oxidase (complex IV, CIV), that cooperate to transfer electrons derived from NADH and succinate to molecular oxygen, creating an electrochemical gradient over the inner membrane that drives transmembrane transport and the ATP synthase. Cytochrome c oxidase is the component of the respiratory chain that catalyzes the reduction of oxygen to water. Electrons originating from reduced cytochrome c in the intermembrane space (IMS) are transferred via the dinuclear copper A center (CU(A)) of subunit 2 and heme A of subunit 1 to the active site in subunit 1, a binuclear center (BNC) formed by heme A3 and copper B (CU(B)). The BNC reduces molecular oxygen to 2 water molecules using 4 electrons from cytochrome c in the IMS and 4 protons from the mitochondrial matrix. This chain is Cytochrome c oxidase subunit 8C, mitochondrial (Cox8c), found in Mus musculus (Mouse).